We begin with the raw amino-acid sequence, 174 residues long: CDP-archaeol synthase (174 aa).

5 helical membrane passes run I14–A34, I59–A79, M83–G103, A118–G138, and A149–L169.

Belongs to the CDP-archaeol synthase family. Mg(2+) is required as a cofactor.

It is found in the cell membrane. It carries out the reaction 2,3-bis-O-(geranylgeranyl)-sn-glycerol 1-phosphate + CTP + H(+) = CDP-2,3-bis-O-(geranylgeranyl)-sn-glycerol + diphosphate. The protein operates within membrane lipid metabolism; glycerophospholipid metabolism. Catalyzes the formation of CDP-2,3-bis-(O-geranylgeranyl)-sn-glycerol (CDP-archaeol) from 2,3-bis-(O-geranylgeranyl)-sn-glycerol 1-phosphate (DGGGP) and CTP. This reaction is the third ether-bond-formation step in the biosynthesis of archaeal membrane lipids. The protein is CDP-archaeol synthase of Aeropyrum pernix (strain ATCC 700893 / DSM 11879 / JCM 9820 / NBRC 100138 / K1).